The chain runs to 444 residues: Phosphoglucosamine mutase (444 aa).

The Phosphoserine intermediate role is filled by Ser-103. Residues Ser-103, Asp-241, Asp-243, and Asp-245 each contribute to the Mg(2+) site. Residue Ser-103 is modified to Phosphoserine.

The protein belongs to the phosphohexose mutase family. Mg(2+) is required as a cofactor. Activated by phosphorylation.

It catalyses the reaction alpha-D-glucosamine 1-phosphate = D-glucosamine 6-phosphate. Catalyzes the conversion of glucosamine-6-phosphate to glucosamine-1-phosphate. This Deinococcus geothermalis (strain DSM 11300 / CIP 105573 / AG-3a) protein is Phosphoglucosamine mutase.